Consider the following 309-residue polypeptide: Intron-encoded DNA endonuclease ai2a (309 aa).

Belongs to the LAGLIDADG endonuclease family.

The protein localises to the mitochondrion. In terms of biological role, mitochondrial DNA endonuclease involved in intron homing. Cleaves only one strand of intronless DNA sequence at the site which coincides with the I-SceII cleavage recognition site. This chain is Intron-encoded DNA endonuclease ai2a (ai2a), found in Dictyostelium discoideum (Social amoeba).